Reading from the N-terminus, the 157-residue chain is MNLDGSAQDPEKREYSSVCVGREDDIKKSERMTAVVHDREVVIFYHKGEYHAMDIRCYHSGGPLHLGDIEDFDGRPCIVCPWHKYKITLATGEGLYQSINPKDPSAKPKWCSKGIKQRIHTVTVDNGNIYVTLSNEPFKCDSDFYATGDFKVIKSSS.

Position 1 is an N-acetylmethionine (methionine 1). Serine 6 carries the phosphoserine modification. 2 Rieske domains span residues 16 to 94 and 17 to 131; these read SSVC…TGEG and SVCV…NIYV. [2Fe-2S] cluster-binding residues include cysteine 57, histidine 59, cysteine 80, and histidine 83.

[2Fe-2S] cluster is required as a cofactor.

This chain is Rieske domain-containing protein (RFESD), found in Homo sapiens (Human).